We begin with the raw amino-acid sequence, 701 residues long: Long chain acyl-CoA synthetase 6, peroxisomal (701 aa).

Positions 1 to 38 (MDSSSSSSSAAARRRINAIHSHLVTSSRSSPLLRSNPT) are cleaved as a propeptide — removed in mature form. A Microbody targeting signal motif is present at residues 15–23 (RINAIHSHL). ATP is bound at residue 266–277 (ICYTSGTTGTPK). The tract at residues 526–550 (DGWLHTGDIGLWLPGGRLKIIDRKK) is fatty acid-binding.

Belongs to the ATP-dependent AMP-binding enzyme family. Mg(2+) is required as a cofactor. Expressed in roots, stems, leaves flowers and germinating seedling. Preferentially expressed in seeds and senescent leaves.

It localises to the peroxisome. Its subcellular location is the glyoxysome membrane. It carries out the reaction a long-chain fatty acid + ATP + CoA = a long-chain fatty acyl-CoA + AMP + diphosphate. The catalysed reaction is tetradecanoate + ATP + CoA = tetradecanoyl-CoA + AMP + diphosphate. The enzyme catalyses hexadecanoate + ATP + CoA = hexadecanoyl-CoA + AMP + diphosphate. It catalyses the reaction (9Z)-octadecenoate + ATP + CoA = (9Z)-octadecenoyl-CoA + AMP + diphosphate. It carries out the reaction (9Z,12Z)-octadecadienoate + ATP + CoA = (9Z,12Z)-octadecadienoyl-CoA + AMP + diphosphate. The catalysed reaction is (9Z,12Z,15Z)-octadecatrienoate + ATP + CoA = (9Z,12Z,15Z)-octadecatrienoyl-CoA + AMP + diphosphate. It participates in lipid metabolism; fatty acid metabolism. Its function is as follows. Activation of long-chain fatty acids for both synthesis of cellular lipids, and degradation via beta-oxidation. Preferentially uses palmitate, palmitoleate, oleate, linoleate and eicosenoate as substrates. Can use myristate and linolenate as substrates. May play a regulatory role both in fatty acid import into glyoxysomes and in fatty acid beta-oxidation. Functions redundantly with LACS7 in lipid mobilization for beta-oxidation during seed germination, which is essential for postgerminative growth and seedling establishment. This Arabidopsis thaliana (Mouse-ear cress) protein is Long chain acyl-CoA synthetase 6, peroxisomal.